A 356-amino-acid polypeptide reads, in one-letter code: UDP-N-acetylglucosamine--N-acetylmuramyl-(pentapeptide) pyrophosphoryl-undecaprenol N-acetylglucosamine transferase (356 aa).

UDP-N-acetyl-alpha-D-glucosamine contacts are provided by residues 15–17 (TGG), Asn127, Arg163, Ser191, Ile244, 263–268 (ALTVSE), and Gln288.

Belongs to the glycosyltransferase 28 family. MurG subfamily.

The protein resides in the cell inner membrane. It catalyses the reaction di-trans,octa-cis-undecaprenyl diphospho-N-acetyl-alpha-D-muramoyl-L-alanyl-D-glutamyl-meso-2,6-diaminopimeloyl-D-alanyl-D-alanine + UDP-N-acetyl-alpha-D-glucosamine = di-trans,octa-cis-undecaprenyl diphospho-[N-acetyl-alpha-D-glucosaminyl-(1-&gt;4)]-N-acetyl-alpha-D-muramoyl-L-alanyl-D-glutamyl-meso-2,6-diaminopimeloyl-D-alanyl-D-alanine + UDP + H(+). The protein operates within cell wall biogenesis; peptidoglycan biosynthesis. Cell wall formation. Catalyzes the transfer of a GlcNAc subunit on undecaprenyl-pyrophosphoryl-MurNAc-pentapeptide (lipid intermediate I) to form undecaprenyl-pyrophosphoryl-MurNAc-(pentapeptide)GlcNAc (lipid intermediate II). This chain is UDP-N-acetylglucosamine--N-acetylmuramyl-(pentapeptide) pyrophosphoryl-undecaprenol N-acetylglucosamine transferase, found in Yersinia pestis bv. Antiqua (strain Antiqua).